A 105-amino-acid polypeptide reads, in one-letter code: Small ribosomal subunit protein uS10 (105 aa).

Belongs to the universal ribosomal protein uS10 family. As to quaternary structure, part of the 30S ribosomal subunit.

Functionally, involved in the binding of tRNA to the ribosomes. The protein is Small ribosomal subunit protein uS10 of Synechococcus elongatus (strain ATCC 33912 / PCC 7942 / FACHB-805) (Anacystis nidulans R2).